A 77-amino-acid chain; its full sequence is MQVLVRDNNVDQALRALKKKMQREGIFREMKMRSYYEKPSERRAREKAEAIRRTRKLARKRAQREGFVSNGRTIAVK.

The protein belongs to the bacterial ribosomal protein bS21 family.

The sequence is that of Small ribosomal subunit protein bS21 from Bartonella tribocorum (strain CIP 105476 / IBS 506).